The primary structure comprises 363 residues: Chorismate synthase (363 aa).

Residue arginine 48 coordinates NADP(+). Residues 125–127 (RSS), 238–239 (NA), glycine 278, 293–297 (KPTAS), and arginine 319 each bind FMN.

Belongs to the chorismate synthase family. As to quaternary structure, homotetramer. FMNH2 is required as a cofactor.

The catalysed reaction is 5-O-(1-carboxyvinyl)-3-phosphoshikimate = chorismate + phosphate. The protein operates within metabolic intermediate biosynthesis; chorismate biosynthesis; chorismate from D-erythrose 4-phosphate and phosphoenolpyruvate: step 7/7. Functionally, catalyzes the anti-1,4-elimination of the C-3 phosphate and the C-6 proR hydrogen from 5-enolpyruvylshikimate-3-phosphate (EPSP) to yield chorismate, which is the branch point compound that serves as the starting substrate for the three terminal pathways of aromatic amino acid biosynthesis. This reaction introduces a second double bond into the aromatic ring system. This chain is Chorismate synthase, found in Acinetobacter baumannii (strain AB0057).